The following is a 237-amino-acid chain: Insulin-like growth factor-binding protein 4 (237 aa).

The region spanning 2–82 (EAIHCPPCSE…VHGQGVCMEL (81 aa)) is the IGFBP N-terminal domain. Intrachain disulfides connect cysteine 6-cysteine 32, cysteine 9-cysteine 34, cysteine 17-cysteine 35, cysteine 23-cysteine 38, cysteine 46-cysteine 59, and cysteine 53-cysteine 79. The N-linked (GlcNAc...) asparagine glycan is linked to asparagine 104. Disulfide bonds link cysteine 110-cysteine 117, cysteine 153-cysteine 183, cysteine 194-cysteine 205, and cysteine 207-cysteine 228. The region spanning 150–228 (QGSCQSELHR…GLEPKGELDC (79 aa)) is the Thyroglobulin type-1 domain. Serine 234 carries the post-translational modification Phosphoserine.

Binds IGF2 more than IGF1. In terms of processing, there are two different molecular mass variants (29 kDa and 24 kDa forms). The 29 kDa form was shown to be N-glycosylated. As to expression, detected in adult ewe, liver &gt; kidney &gt; lung &gt;&gt; heart and also in several fetal tissues.

It is found in the secreted. In terms of biological role, IGF-binding proteins prolong the half-life of the IGFs and have been shown to either inhibit or stimulate the growth promoting effects of the IGFs on cell culture. They alter the interaction of IGFs with their cell surface receptors. This is Insulin-like growth factor-binding protein 4 (IGFBP4) from Ovis aries (Sheep).